The following is a 317-amino-acid chain: Pinoresinol reductase 1 (317 aa).

Residues T18, Y20, I21, R41, K50, S90, G91, R95, N98, S121, and E122 each contribute to the NADP(+) site. Residue M125 coordinates (-)-pinoresinol. 2 residues coordinate NADP(+): K144 and F166. K144 serves as the catalytic Proton acceptor. 2 residues coordinate (-)-pinoresinol: M177 and V178.

Belongs to the NmrA-type oxidoreductase family. Isoflavone reductase subfamily. In terms of assembly, forms homodimers. As to expression, expressed in roots and stems.

The enzyme catalyses (-)-lariciresinol + NADP(+) = (-)-pinoresinol + NADPH + H(+). The catalysed reaction is (+)-lariciresinol + NADP(+) = (+)-pinoresinol + NADPH + H(+). Its function is as follows. Reductase involved in lignan biosynthesis. Involved in secondary cell wall biosynthesis in fiber cells. Unlike conventional pinoresinol reductases that can reduce both pinoresinol and lariciresinol, PRR1 shows a strict substrate preference toward pinoresinol. Active on both (+) and (-)-pinoresinol. Abstracts the 4R-hydride from the NADPH cofactor during catalysis. In Arabidopsis thaliana (Mouse-ear cress), this protein is Pinoresinol reductase 1.